Reading from the N-terminus, the 269-residue chain is HTH-type transcriptional regulator Rv0792c (269 aa).

Positions 20-88 (VPASTQLAEA…QGLGTFVADP (69 aa)) constitute an HTH gntR-type domain. Residues 48–67 (ERELIDRSGLSRVTVRAAVG) constitute a DNA-binding region (H-T-H motif).

In terms of assembly, homodimer.

DNA-binding activity is increased in the presence of L-arabinose and inhibited by the small molecule I-OMe-Tyrphostin. Transcriptional regulator required for survival in oxidative stress and for establishing infection in host tissues. Regulates the expression of a subset of genes involved in oxidative stress adaptation and virulence, enabling the bacteria to adapt and persist in host tissues. The chain is HTH-type transcriptional regulator Rv0792c from Mycobacterium tuberculosis (strain ATCC 25618 / H37Rv).